A 68-amino-acid chain; its full sequence is Large ribosomal subunit protein bL35 (68 aa).

Belongs to the bacterial ribosomal protein bL35 family.

This is Large ribosomal subunit protein bL35 from Aster yellows witches'-broom phytoplasma (strain AYWB).